The chain runs to 135 residues: uncharacterized protein (135 aa).

Transmembrane regions (helical) follow at residues 20 to 40 and 47 to 67; these read IFSF…NTKL and IAYF…IHGT.

This sequence belongs to the plectrovirus ORF5 family.

The protein localises to the host membrane. This is an uncharacterized protein from Spiroplasma virus SpV1-C74 (SpV1).